The primary structure comprises 122 residues: ATP synthase epsilon chain (122 aa).

This sequence belongs to the ATPase epsilon chain family. As to quaternary structure, F-type ATPases have 2 components, CF(1) - the catalytic core - and CF(0) - the membrane proton channel. CF(1) has five subunits: alpha(3), beta(3), gamma(1), delta(1), epsilon(1). CF(0) has three main subunits: a, b and c.

The protein resides in the cell membrane. Its function is as follows. Produces ATP from ADP in the presence of a proton gradient across the membrane. The protein is ATP synthase epsilon chain of Rhodococcus opacus (strain B4).